The chain runs to 628 residues: Netrin-4 (628 aa).

The N-terminal stretch at 1–19 (MGSCARLLLLWGCSAVAAG) is a signal peptide. One can recognise a Laminin N-terminal domain in the interval 30–261 (CEKACNPRMG…AVYDFIVKGS (232 aa)). Residues Asn56 and Asn163 are each glycosylated (N-linked (GlcNAc...) asparagine). Intrachain disulfides connect Cys262-Cys271, Cys264-Cys293, Cys295-Cys304, Cys307-Cys329, Cys332-Cys341, Cys334-Cys359, Cys362-Cys371, Cys374-Cys392, Cys395-Cys413, Cys397-Cys420, Cys422-Cys431, and Cys434-Cys446. 3 Laminin EGF-like domains span residues 262–331 (CFCN…ECRT), 332–394 (CKCN…ACKA), and 395–448 (CSCH…GCRP). Asn353 carries N-linked (GlcNAc...) asparagine glycosylation. N-linked (GlcNAc...) asparagine glycosylation occurs at Asn483. 2 disulfide bridges follow: Cys506-Cys576 and Cys520-Cys627. One can recognise an NTR domain in the interval 506-627 (CECKEQVLGN…RVMHILKRDC (122 aa)).

As to quaternary structure, may form a homodimer. In terms of tissue distribution, expressed in kidney, liver, heart, ovary, testis, retina, brain, olfactory bulb, and widely expressed in embryo.

It is found in the secreted. Its subcellular location is the extracellular space. It localises to the extracellular matrix. The protein localises to the basement membrane. In terms of biological role, may play an important role in neural, kidney and vascular development. Promotes neurite elongation from olfactory bulb explants. This is Netrin-4 (Ntn4) from Mus musculus (Mouse).